Consider the following 148-residue polypeptide: UPF0756 membrane protein YeaL (148 aa).

4 consecutive transmembrane segments (helical) span residues 14–34 (ALGF…LIIV), 51–71 (LSIG…SGTL), 86–106 (LVAI…VTLM), and 121–141 (VLGV…AGLV).

It belongs to the UPF0756 family.

It is found in the cell membrane. The chain is UPF0756 membrane protein YeaL from Shigella flexneri.